The sequence spans 40 residues: Sapecin-C (40 aa).

3 disulfides stabilise this stretch: Cys-3/Cys-30, Cys-16/Cys-36, and Cys-20/Cys-38.

This sequence belongs to the invertebrate defensin family. Type 1 subfamily. In terms of tissue distribution, hemocytes and fat body.

It is found in the secreted. Its function is as follows. Sapecins, which are potent bactericidal proteins, are produced in response to injury. Sapecin C is cytotoxic to Gram-positive bacteria. In Sarcophaga peregrina (Flesh fly), this protein is Sapecin-C.